We begin with the raw amino-acid sequence, 151 residues long: Proteolipid protein 2 (151 aa).

An MARVEL domain is found at 19–137 (FSRTKKGILL…DAYITFPLKQ (119 aa)). 4 consecutive transmembrane segments (helical) span residues 25-45 (GILLFAEIILCLVILICFSAS), 48-68 (AYSSLSVIEMIFAAVLFVFYM), 85-105 (FFRSLIAAILYLITSIVVLVE), and 112-132 (IVAGVLGLLATLLFGYDAYIT).

It localises to the membrane. May play a role in cell differentiation in the intestinal epithelium. The polypeptide is Proteolipid protein 2 (Plp2) (Rattus norvegicus (Rat)).